The chain runs to 285 residues: Non-homologous end joining protein Ku (285 aa).

In terms of domain architecture, Ku spans 9–176 (ISFGLVNVPV…PAEIRHLEAS (168 aa)). The interval 250-285 (AMTDQKKQQNTAESETEEKPTKSTLTPRGRRKVKGA) is disordered.

The protein belongs to the prokaryotic Ku family. In terms of assembly, homodimer. Interacts with LigD.

Functionally, with LigD forms a non-homologous end joining (NHEJ) DNA repair enzyme, which repairs dsDNA breaks with reduced fidelity. Binds linear dsDNA with 5'- and 3'- overhangs but not closed circular dsDNA nor ssDNA. Recruits and stimulates the ligase activity of LigD. In Desulfitobacterium hafniense (strain DSM 10664 / DCB-2), this protein is Non-homologous end joining protein Ku.